A 487-amino-acid polypeptide reads, in one-letter code: 3-octaprenyl-4-hydroxybenzoate carboxy-lyase (487 aa).

Asn-172 provides a ligand contact to Mn(2+). Residues 175 to 177 (IYR), 189 to 191 (RWL), and 194 to 195 (RG) each bind prenylated FMN. Mn(2+) is bound at residue Glu-238. Residue Asp-287 is the Proton donor of the active site.

The protein belongs to the UbiD family. As to quaternary structure, homohexamer. Prenylated FMN is required as a cofactor. The cofactor is Mn(2+).

The protein resides in the cell membrane. It carries out the reaction a 4-hydroxy-3-(all-trans-polyprenyl)benzoate + H(+) = a 2-(all-trans-polyprenyl)phenol + CO2. It participates in cofactor biosynthesis; ubiquinone biosynthesis. Its function is as follows. Catalyzes the decarboxylation of 3-octaprenyl-4-hydroxy benzoate to 2-octaprenylphenol, an intermediate step in ubiquinone biosynthesis. The polypeptide is 3-octaprenyl-4-hydroxybenzoate carboxy-lyase (Actinobacillus pleuropneumoniae serotype 5b (strain L20)).